A 148-amino-acid polypeptide reads, in one-letter code: Putative nickel-responsive regulator (148 aa).

Residues His-76, His-87, His-89, and Cys-95 each coordinate Ni(2+).

The protein belongs to the transcriptional regulatory CopG/NikR family. Requires Ni(2+) as cofactor.

Its function is as follows. Transcriptional regulator. The polypeptide is Putative nickel-responsive regulator (Rhodopseudomonas palustris (strain ATCC BAA-98 / CGA009)).